Consider the following 623-residue polypeptide: Alpha-1,2-mannosyltransferase Alg9 (623 aa).

8 consecutive transmembrane segments (helical) span residues 152-172 (LIFY…ERYM), 193-223 (LFSV…AAWW), 229-254 (FAIF…PLVL), 266-284 (FVQW…MIAI), 326-348 (FLNF…IDYL), 360-378 (FPHY…VFFA), 390-410 (IYPL…RIFF), and 431-452 (FIAI…FALY).

This sequence belongs to the glycosyltransferase 22 family.

It localises to the endoplasmic reticulum membrane. The enzyme catalyses an alpha-D-Man-(1-&gt;2)-alpha-D-Man-(1-&gt;2)-alpha-D-Man-(1-&gt;3)-[alpha-D-Man-(1-&gt;3)-alpha-D-Man-(1-&gt;6)]-beta-D-Man-(1-&gt;4)-beta-D-GlcNAc-(1-&gt;4)-alpha-D-GlcNAc-diphospho-di-trans,poly-cis-dolichol + a di-trans,poly-cis-dolichyl beta-D-mannosyl phosphate = an alpha-D-Man-(1-&gt;2)-alpha-D-Man-(1-&gt;2)-alpha-D-Man-(1-&gt;3)-[alpha-D-Man-(1-&gt;2)-alpha-D-Man-(1-&gt;3)-alpha-D-Man-(1-&gt;6)]-beta-D-Man-(1-&gt;4)-beta-D-GlcNAc-(1-&gt;4)-alpha-D-GlcNAc-diphospho-di-trans,poly-cis-dolichol + a di-trans,poly-cis-dolichyl phosphate + H(+). It carries out the reaction an alpha-D-Man-(1-&gt;2)-alpha-D-Man-(1-&gt;2)-alpha-D-Man-(1-&gt;3)-[alpha-D-Man-(1-&gt;2)-alpha-D-Man-(1-&gt;3)-[alpha-D-Man-(1-&gt;6)]-alpha-D-Man-(1-&gt;6)]-beta-D-Man-(1-&gt;4)-beta-D-GlcNAc-(1-&gt;4)-alpha-D-GlcNAc-diphospho-di-trans,poly-cis-dolichol + a di-trans,poly-cis-dolichyl beta-D-mannosyl phosphate = an alpha-D-Man-(1-&gt;2)-alpha-D-Man-(1-&gt;2)-alpha-D-Man-(1-&gt;3)-[alpha-D-Man-(1-&gt;2)-alpha-D-Man-(1-&gt;3)-[alpha-D-Man-(1-&gt;2)-alpha-D-Man-(1-&gt;6)]-alpha-D-Man-(1-&gt;6)]-beta-D-Man-(1-&gt;4)-beta-D-GlcNAc-(1-&gt;4)-alpha-D-GlcNAc-diphospho-di-trans,poly-cis-dolichol + a di-trans,poly-cis-dolichyl phosphate + H(+). It participates in protein modification; protein glycosylation. Functionally, probable alpha-1,2-mannosyltransferase involved in the N-glycosylation pathway. Probably involved in glycosylation of the TNF receptor grnd, regulating its ligand affinity. Required for normal epithelial growth and architecture. Suppressor of JNK-dependent intestinal stem cell proliferation. The sequence is that of Alpha-1,2-mannosyltransferase Alg9 from Drosophila melanogaster (Fruit fly).